The chain runs to 681 residues: Mitosis inhibitor nif1 (681 aa).

Positions 22–43 are disordered; it reads LNKKDGNDDDKAEHSKRSGYHG. Residues 23 to 37 are compositionally biased toward basic and acidic residues; sequence NKKDGNDDDKAEHSK. A Phosphoserine modification is found at Ser-70. 2 disordered regions span residues 80 to 104 and 182 to 324; these read TTSG…SSPF and YYHE…SSRQ. The segment covering 92 to 103 has biased composition (low complexity); it reads ESPASPAEASSP. Residues 191–203 show a composition bias toward polar residues; the sequence is TASNTSPTPNSIK. Phosphoserine is present on Ser-196. Residues 238–278 show a composition bias toward low complexity; that stretch reads SSGDSTPLSGSSSSKGMLMSMSTSENHSLSSNPELSNSNLL. Residues 296 to 306 show a composition bias toward basic and acidic residues; it reads SSKEPDKEHST. Sel1-like repeat units lie at residues 547–582 and 583–618; these read ALIL…AWGD and ADAQ…FQGI.

It is found in the cytoplasm. Functionally, functions as a negative regulator of mitosis. It interacts with the C-terminal of nim1, thereby inhibiting its kinase activity which phosphorylates wee1. The sequence is that of Mitosis inhibitor nif1 (nif1) from Schizosaccharomyces pombe (strain 972 / ATCC 24843) (Fission yeast).